The following is a 151-amino-acid chain: Transcriptional regulator MraZ (151 aa).

SpoVT-AbrB domains lie at 7–53 (EYDC…SQTE) and 82–125 (INEV…SPDL).

It belongs to the MraZ family. Forms oligomers.

Its subcellular location is the cytoplasm. The protein localises to the nucleoid. This chain is Transcriptional regulator MraZ, found in Cytophaga hutchinsonii (strain ATCC 33406 / DSM 1761 / CIP 103989 / NBRC 15051 / NCIMB 9469 / D465).